The primary structure comprises 254 residues: Dihydroorotate dehydrogenase B (NAD(+)), electron transfer subunit (254 aa).

One can recognise an FAD-binding FR-type domain in the interval 1-99 (MLQTEMKVIQ…LGPLGKGFDI (99 aa)). Residues 50 to 53 (RPIS), 67 to 69 (LYR), and 74 to 75 (GT) each bind FAD. Positions 218, 223, 226, and 241 each coordinate [2Fe-2S] cluster.

It belongs to the PyrK family. As to quaternary structure, heterotetramer of 2 PyrK and 2 PyrD type B subunits. [2Fe-2S] cluster is required as a cofactor. FAD serves as cofactor.

The protein operates within pyrimidine metabolism; UMP biosynthesis via de novo pathway; orotate from (S)-dihydroorotate (NAD(+) route): step 1/1. Functionally, responsible for channeling the electrons from the oxidation of dihydroorotate from the FMN redox center in the PyrD type B subunit to the ultimate electron acceptor NAD(+). The chain is Dihydroorotate dehydrogenase B (NAD(+)), electron transfer subunit from Listeria monocytogenes serotype 4a (strain HCC23).